The chain runs to 444 residues: Bifunctional enolase 2/transcriptional activator (444 aa).

Residues H163 and E172 each contribute to the substrate site. E215 functions as the Proton donor in the catalytic mechanism. The Mg(2+) site is built by D250, E300, and D327. Residues E300 and D327 each contribute to the substrate site. The active-site Proton acceptor is the K352. Substrate contacts are provided by residues 379–382 and K403; that span reads SHRS.

This sequence belongs to the enolase family. In terms of assembly, homodimer. The cofactor is Mg(2+).

It localises to the cytoplasm. It is found in the cytosol. The protein localises to the nucleus. Its subcellular location is the mitochondrion outer membrane. The catalysed reaction is (2R)-2-phosphoglycerate = phosphoenolpyruvate + H2O. The protein operates within carbohydrate degradation; glycolysis; pyruvate from D-glyceraldehyde 3-phosphate: step 4/5. Its function is as follows. Multifunctional enzyme that acts as an enolase involved in the metabolism and as a positive regulator of cold-responsive gene transcription. Binds to the cis-element the gene promoter of STZ/ZAT10, a zinc finger transcriptional repressor. The polypeptide is Bifunctional enolase 2/transcriptional activator (ENO2) (Arabidopsis thaliana (Mouse-ear cress)).